Here is a 342-residue protein sequence, read N- to C-terminus: Phosphate acyltransferase (342 aa).

The protein belongs to the PlsX family. As to quaternary structure, homodimer. Probably interacts with PlsY.

The protein resides in the cytoplasm. The enzyme catalyses a fatty acyl-[ACP] + phosphate = an acyl phosphate + holo-[ACP]. The protein operates within lipid metabolism; phospholipid metabolism. In terms of biological role, catalyzes the reversible formation of acyl-phosphate (acyl-PO(4)) from acyl-[acyl-carrier-protein] (acyl-ACP). This enzyme utilizes acyl-ACP as fatty acyl donor, but not acyl-CoA. The chain is Phosphate acyltransferase from Shewanella halifaxensis (strain HAW-EB4).